Reading from the N-terminus, the 476-residue chain is 3-isopropylmalate dehydratase large subunit (476 aa).

Positions 355, 416, and 419 each coordinate [4Fe-4S] cluster.

The protein belongs to the aconitase/IPM isomerase family. LeuC type 1 subfamily. In terms of assembly, heterodimer of LeuC and LeuD. The cofactor is [4Fe-4S] cluster.

It carries out the reaction (2R,3S)-3-isopropylmalate = (2S)-2-isopropylmalate. Its pathway is amino-acid biosynthesis; L-leucine biosynthesis; L-leucine from 3-methyl-2-oxobutanoate: step 2/4. Functionally, catalyzes the isomerization between 2-isopropylmalate and 3-isopropylmalate, via the formation of 2-isopropylmaleate. The protein is 3-isopropylmalate dehydratase large subunit of Sphingopyxis alaskensis (strain DSM 13593 / LMG 18877 / RB2256) (Sphingomonas alaskensis).